Reading from the N-terminus, the 114-residue chain is Ribulose bisphosphate carboxylase small subunit 2 (114 aa).

This sequence belongs to the RuBisCO small chain family. As to quaternary structure, heterohexadecamer of 8 large and 8 small subunits. Forms a CsoS2-CsoS1-RuBisCO complex.

The protein localises to the carboxysome. In terms of biological role, ruBisCO catalyzes two reactions: the carboxylation of D-ribulose 1,5-bisphosphate, the primary event in carbon dioxide fixation, as well as the oxidative fragmentation of the pentose substrate. Both reactions occur simultaneously and in competition at the same active site. Although the small subunit is not catalytic it is essential for maximal activity. Functionally, replacing the endogenous type I ccbLS genes in H.neapolitanus with this carboxysomally targeted enzyme reconstitutes RuBisCO with about 25% of normal activity; the active enzyme is targeted to carboxysomes. The sequence is that of Ribulose bisphosphate carboxylase small subunit 2 from Hydrogenovibrio crunogenus (strain DSM 25203 / XCL-2) (Thiomicrospira crunogena).